Here is a 170-residue protein sequence, read N- to C-terminus: Probable chemoreceptor glutamine deamidase CheD (170 aa).

The protein belongs to the CheD family.

It catalyses the reaction L-glutaminyl-[protein] + H2O = L-glutamyl-[protein] + NH4(+). Probably deamidates glutamine residues to glutamate on methyl-accepting chemotaxis receptors (MCPs), playing an important role in chemotaxis. The sequence is that of Probable chemoreceptor glutamine deamidase CheD from Maridesulfovibrio salexigens (strain ATCC 14822 / DSM 2638 / NCIMB 8403 / VKM B-1763) (Desulfovibrio salexigens).